Here is a 413-residue protein sequence, read N- to C-terminus: Histidinol-phosphate aminotransferase, chloroplastic (413 aa).

Residues 1-35 (MGVIELCNTSSICIGRAKPSCCSIERNQRRRIICM) constitute a chloroplast transit peptide. Lys273 bears the N6-(pyridoxal phosphate)lysine mark.

It belongs to the class-II pyridoxal-phosphate-dependent aminotransferase family. Histidinol-phosphate aminotransferase subfamily. As to quaternary structure, homodimer. Pyridoxal 5'-phosphate serves as cofactor. As to expression, mainly expressed in green tissues.

The protein localises to the plastid. The protein resides in the chloroplast. It catalyses the reaction L-histidinol phosphate + 2-oxoglutarate = 3-(imidazol-4-yl)-2-oxopropyl phosphate + L-glutamate. It functions in the pathway amino-acid biosynthesis; L-histidine biosynthesis; L-histidine from 5-phospho-alpha-D-ribose 1-diphosphate: step 7/9. The chain is Histidinol-phosphate aminotransferase, chloroplastic (HPA) from Nicotiana tabacum (Common tobacco).